The following is a 419-amino-acid chain: MESSLYETLKVTAQRAQRSTMALAQVPSGIKNKALRAMARSLRTAHSEILESNTTDLEFGRQMGLSETLLDRLKLTPQRLEGMALSLEQIAALKDPVGEIVGGWRHPEGLEIVRVRVPLGLIGIIYEARPNVTADAIGLCLKSGNGVLLKGGKEAENSNQAISSVLKAAAYEQGIPEGCIEQLPGERAVVEALIRLNPYLALVIPRGGHSLIDFVVRNATVPVLETGVGNCHIYVAASADLEMARRIVINAKVQRPSVCNAAEKLLVHRDTVVTHLAPLLEDLHAHGIEVRGCPRTVAFDPKVKSAGEEDWGKEYLDKIIAIKVVDSTREAIDWINHYGTRHSEAIVTANYEEARRFTAAIDAAAVYVNASTRFTDGGEFGFGAEIGISTQKLHARGPVGLVELTTTKYVVSGSGQIRP.

The protein belongs to the gamma-glutamyl phosphate reductase family.

Its subcellular location is the cytoplasm. It carries out the reaction L-glutamate 5-semialdehyde + phosphate + NADP(+) = L-glutamyl 5-phosphate + NADPH + H(+). The protein operates within amino-acid biosynthesis; L-proline biosynthesis; L-glutamate 5-semialdehyde from L-glutamate: step 2/2. Its function is as follows. Catalyzes the NADPH-dependent reduction of L-glutamate 5-phosphate into L-glutamate 5-semialdehyde and phosphate. The product spontaneously undergoes cyclization to form 1-pyrroline-5-carboxylate. The polypeptide is Gamma-glutamyl phosphate reductase (Gloeobacter violaceus (strain ATCC 29082 / PCC 7421)).